We begin with the raw amino-acid sequence, 428 residues long: L-rhamnose isomerase (428 aa).

3 residues coordinate Mn(2+): His260, Asp292, and Asp294.

It belongs to the rhamnose isomerase family. Mn(2+) is required as a cofactor.

The protein resides in the cytoplasm. It carries out the reaction L-rhamnopyranose = L-rhamnulose. Its pathway is carbohydrate degradation; L-rhamnose degradation; glycerone phosphate from L-rhamnose: step 1/3. In terms of biological role, catalyzes the interconversion of L-rhamnose and L-rhamnulose. This chain is L-rhamnose isomerase, found in Enterococcus faecalis (strain ATCC 700802 / V583).